Consider the following 138-residue polypeptide: Dehydratase iacD (138 aa).

Residues 18 to 113 form the EthD domain; that stretch reads GVSEEDFIEW…LKDQDVWMDN (96 aa).

Belongs to the tpcK family.

The protein operates within secondary metabolite biosynthesis. In terms of biological role, dehydratase; part of the gene cluster that mediates the biosynthesis of iso-A82775C, a enylepoxycyclohexane and biosynthetic precursor of the chloropestolide anticancer natural products. Within the cluster, the prenyltransferase iacE prenylates siccayne to generate pestalodiol E, using dimethylallyl diphosphate (DMAPP) as cosubstrate. The probable oxidoreductase iacF is then involved in the epoxidation of pestalodiol F to pestalodiol F, which is further converted to pestalofone A by the short-chain dehydrogenase/reductase iacG. Iso-A82775C is subsequently generated from pestalofone A by the short-chain dehydrogenase/reductase iacC. Iso-A82775C is further condensed with maldoxin via a Diels-Alder reaction to produce the anticancer natural products chloropestolides A to E. The protein is Dehydratase iacD of Pestalotiopsis fici (strain W106-1 / CGMCC3.15140).